Reading from the N-terminus, the 587-residue chain is Zinc finger protein 69 (587 aa).

The disordered stretch occupies residues 42–128; it reads NGTQQESLAD…TPGTTAAGSQ (87 aa). The region spanning 76 to 147 is the KRAB domain; sequence HDEATPGTPA…VDLSQEEWGQ (72 aa). C2H2-type zinc fingers lie at residues 271–293, 299–321, 327–349, 355–377, 383–405, 411–433, 439–461, 467–489, and 495–517; these read HKKK…ILEQ, KPAR…CMRA, NVCE…HTGE, KECG…HTGE, EECG…HTGE, DKCQ…HSGE, SECG…HTGE, TSCC…HTGE, and KECG…HTGV. Residues 564–587 form a disordered region; it reads SRHQKIHRRNTFRDDPGHENKRQL. The span at 574 to 587 shows a compositional bias: basic and acidic residues; the sequence is TFRDDPGHENKRQL.

It belongs to the krueppel C2H2-type zinc-finger protein family.

Its subcellular location is the nucleus. Putative transcription factor that appears to regulate lipid metabolism. The protein is Zinc finger protein 69 of Mus musculus (Mouse).